Here is a 553-residue protein sequence, read N- to C-terminus: Glycerol kinase 3 (553 aa).

Thr-20 lines the substrate pocket. Arg-24 is a binding site for ATP. 3 residues coordinate substrate: Arg-94, Tyr-148, and Asp-259. Residues Thr-281, Gly-326, and 427–431 (GMTSN) each bind ATP.

This sequence belongs to the FGGY kinase family.

It localises to the mitochondrion outer membrane. The protein localises to the cytoplasm. It carries out the reaction glycerol + ATP = sn-glycerol 3-phosphate + ADP + H(+). The protein operates within polyol metabolism; glycerol degradation via glycerol kinase pathway; sn-glycerol 3-phosphate from glycerol: step 1/1. In terms of biological role, may be involved in the regulation of glycerol uptake and metabolism. The chain is Glycerol kinase 3 from Homo sapiens (Human).